Here is a 657-residue protein sequence, read N- to C-terminus: Broad substrate specificity ATP-binding cassette transporter ABCG2 (657 aa).

The disordered stretch occupies residues 1 to 25 (MSSSNDHVLVPMSQRNKNGLPGMSS). The Cytoplasmic segment spans residues 1-395 (MSSSNDHVLV…KNLLGNPQAS (395 aa)). The region spanning 48–285 (VKSGFLVRKT…FASAGYHCEP (238 aa)) is the ABC transporter domain. ATP-binding positions include 79–86 (GPTGGGKS), 183–189 (RGISGGE), Glu210, and His242. The ABC transmembrane type-2 domain occupies 389–653 (LGNPQASVAQ…TIAYLKLLFL (265 aa)). Residues 396–416 (VAQLIVTVILGLIIGALYFGL) traverse the membrane as a helical segment. The Extracellular segment spans residues 417 to 428 (KNDPTGMQNRAG). Residues 429–449 (VFFFLTTNQCFTSVSAVELFV) traverse the membrane as a helical segment. Residues 450 to 477 (VEKKLFIHEYISGYYRVSSYFFGKLVSD) lie on the Cytoplasmic side of the membrane. A helical transmembrane segment spans residues 478–498 (LLPMRFLPSVIYTCILYFMLG). Over 499–506 (LKRTVEAF) the chain is Extracellular. The helical transmembrane segment at 507 to 527 (FIMMFTLIMVAYTASSMALAI) threads the bilayer. Residues 528 to 535 (AAGQSVVS) lie on the Cytoplasmic side of the membrane. A helical transmembrane segment spans residues 536–556 (VATLLMTISFVFMMLFSGLLV). Residues 557–632 (NLRTIGPWLS…LSPWGLWRNH (76 aa)) lie on the Extracellular side of the membrane. Residues Cys592 and Cys610 are joined by a disulfide bond. 2 N-linked (GlcNAc...) asparagine glycosylation sites follow: Asn596 and Asn600. A helical membrane pass occupies residues 633–653 (VALACMIIIFLTIAYLKLLFL). The Cytoplasmic segment spans residues 654–657 (KKYS).

It belongs to the ABC transporter superfamily. ABCG family. Eye pigment precursor importer (TC 3.A.1.204) subfamily. Homodimer; disulfide-linked. The minimal functional unit is a homodimer, but the major oligomeric form in plasma membrane is a homotetramer with possibility of higher order oligomerization up to homododecamers. Post-translationally, N-glycosylated in brain capillary, kidney and small intestine but not in heart. N-glycosylated. Glycosylation-deficient ABCG2 is normally expressed and functional. In terms of processing, phosphorylated. Phosphorylation may regulate the localization to the plasma membrane, the homooligomerization and therefore, the activity of the transporter. Highly expressed in brain capillary, kidney and small intestine. Lower expression in heart. Preferentially expressed (at protein level) on the luminal membrane of brain capillaries, in kidney and small intestine.

It is found in the cell membrane. It localises to the apical cell membrane. Its subcellular location is the mitochondrion membrane. It catalyses the reaction ATP + H2O + xenobioticSide 1 = ADP + phosphate + xenobioticSide 2.. It carries out the reaction urate(in) + ATP + H2O = urate(out) + ADP + phosphate + H(+). The enzyme catalyses indoxyl sulfate(in) + ATP + H2O = indoxyl sulfate(out) + ADP + phosphate + H(+). The catalysed reaction is sphing-4-enine 1-phosphate(in) + ATP + H2O = sphing-4-enine 1-phosphate(out) + ADP + phosphate + H(+). It catalyses the reaction estrone 3-sulfate(in) + ATP + H2O = estrone 3-sulfate(out) + ADP + phosphate + H(+). It carries out the reaction dehydroepiandrosterone 3-sulfate(in) + ATP + H2O = dehydroepiandrosterone 3-sulfate(out) + ADP + phosphate + H(+). The enzyme catalyses 4-methylumbelliferone sulfate(in) + ATP + H2O = 4-methylumbelliferone sulfate(out) + ADP + phosphate + H(+). The catalysed reaction is 5,7-dimethyl-2-methylamino-4-(3-pyridylmethyl)-1,3-benzothiazol-6-yl beta-D-glucuronate(in) + ATP + H2O = 5,7-dimethyl-2-methylamino-4-(3-pyridylmethyl)-1,3-benzothiazol-6-yl beta-D-glucuronate(out) + ADP + phosphate + H(+). It catalyses the reaction 4-methylumbelliferone beta-D-glucuronate(in) + ATP + H2O = 4-methylumbelliferone beta-D-glucuronate(out) + ADP + phosphate + H(+). It carries out the reaction 5,7-dimethyl-2-methylamino-4-(3-pyridylmethyl)-1,3-benzothiazol-6-yl sulfate(in) + ATP + H2O = 5,7-dimethyl-2-methylamino-4-(3-pyridylmethyl)-1,3-benzothiazol-6-yl sulfate(out) + ADP + phosphate + H(+). The enzyme catalyses 17beta-estradiol 17-O-(beta-D-glucuronate)(in) + ATP + H2O = 17beta-estradiol 17-O-(beta-D-glucuronate)(out) + ADP + phosphate + H(+). The catalysed reaction is methotrexate(in) + ATP + H2O = methotrexate(out) + ADP + phosphate + H(+). It catalyses the reaction riboflavin(in) + ATP + H2O = riboflavin(out) + ADP + phosphate + H(+). It carries out the reaction pheophorbide a(in) + ATP + H2O = pheophorbide a(out) + ADP + phosphate + H(+). The enzyme catalyses itaconate(in) + ATP + H2O = itaconate(out) + ADP + phosphate + H(+). In terms of biological role, broad substrate specificity ATP-dependent transporter of the ATP-binding cassette (ABC) family that actively extrudes a wide variety of physiological compounds, dietary toxins and xenobiotics from cells. Involved in porphyrin homeostasis, mediating the export of protoporphyrin IX (PPIX) from both mitochondria to cytosol and cytosol to extracellular space, it also functions in the cellular export of heme. Also mediates the efflux of sphingosine-1-P from cells. Acts as a urate exporter functioning in both renal and extrarenal urate excretion. In kidney, it also functions as a physiological exporter of the uremic toxin indoxyl sulfate. Also involved in the excretion of steroids like estrone 3-sulfate/E1S, 3beta-sulfooxy-androst-5-en-17-one/DHEAS, and other sulfate conjugates. Mediates the secretion of the riboflavin and biotin vitamins into milk. Extrudes pheophorbide a, a phototoxic porphyrin catabolite of chlorophyll, reducing its bioavailability. Plays an important role in the exclusion of xenobiotics from the brain. It confers to cells a resistance to multiple drugs and other xenobiotics including mitoxantrone, pheophorbide, camptothecin, methotrexate, azidothymidine, and the anthracyclines daunorubicin and doxorubicin, through the control of their efflux. In placenta, it limits the penetration of drugs from the maternal plasma into the fetus. May play a role in early stem cell self-renewal by blocking differentiation. In inflammatory macrophages, exports itaconate from the cytosol to the extracellular compartment and limits the activation of TFEB-dependent lysosome biogenesis involved in antibacterial innate immune response. This chain is Broad substrate specificity ATP-binding cassette transporter ABCG2 (Abcg2), found in Rattus norvegicus (Rat).